Here is a 173-residue protein sequence, read N- to C-terminus: CKLF-like MARVEL transmembrane domain-containing protein 8 (173 aa).

Residues 36–168 enclose the MARVEL domain; it reads FLRTLPGFLI…NTYFSFIAWR (133 aa). 4 consecutive transmembrane segments (helical) span residues 40-60, 70-90, 105-125, and 147-167; these read LPGF…TLIA, FGWV…FLII, TTVG…AAVV, and FFAF…FIAW.

It belongs to the chemokine-like factor family. As to expression, highly expressed in liver and pancreas.

The protein localises to the membrane. Its subcellular location is the cytoplasm. It localises to the nucleus. In Homo sapiens (Human), this protein is CKLF-like MARVEL transmembrane domain-containing protein 8 (CMTM8).